The primary structure comprises 547 residues: Inositol-tetrakisphosphate 1-kinase 6 (547 aa).

Lysine 263 is a binding site for 1D-myo-inositol 1,3,4-trisphosphate. 2 residues coordinate ATP: arginine 317 and lysine 370. The region spanning 327–539 (LEGLSAEGRP…FWDAIKQSYE (213 aa)) is the ATP-grasp domain. 1D-myo-inositol 1,3,4-trisphosphate-binding residues include histidine 381 and lysine 415. Residues 404 to 415 (QEYIDHGSKIFK), serine 430, and serine 450 contribute to the ATP site. Positions 497, 511, and 513 each coordinate Mg(2+). Positions 513 and 517 each coordinate 1D-myo-inositol 1,3,4-trisphosphate.

The protein belongs to the ITPK1 family. As to quaternary structure, monomer. The cofactor is Mg(2+).

It catalyses the reaction 1D-myo-inositol 3,4,5,6-tetrakisphosphate + ATP = 1D-myo-inositol 1,3,4,5,6-pentakisphosphate + ADP + H(+). The catalysed reaction is 1D-myo-inositol 1,3,4-trisphosphate + ATP = 1D-myo-inositol 1,3,4,5-tetrakisphosphate + ADP + H(+). It carries out the reaction 1D-myo-inositol 1,3,4-trisphosphate + ATP = 1D-myo-inositol 1,3,4,6-tetrakisphosphate + ADP + H(+). Its function is as follows. Kinase that can phosphorylate various inositol polyphosphate such as Ins(3,4,5,6)P4 or Ins(1,3,4)P3 and participates in phytic acid biosynthesis in developing seeds. Phytic acid is the primary storage form of phosphorus in cereal grains and other plant seeds. This chain is Inositol-tetrakisphosphate 1-kinase 6, found in Oryza sativa subsp. indica (Rice).